The primary structure comprises 66 residues: Defensin-like peptide 2/4 (66 aa).

A signal peptide spans 1–22 (MRLAYLLLLLVAVLFQAGGGSA). A propeptide spanning residues 23–24 (KP) is cleaved from the precursor. Met-26 is modified (D-methionine; in form DLP-2). Intrachain disulfides connect Cys-33-Cys-63, Cys-40-Cys-56, and Cys-48-Cys-64.

Stereoinversion of L-Met-26 (in DLP-4) to D-Met-26 (in DLP-2). Produced by the crural gland and detected in venom from the spur located on each male hind leg. Is also widely expressed in both male and female tissues, including brain, intestine, kidney, lung, spleen and testis.

The protein localises to the secreted. Does not show antimicrobial, myotoxic, hemolytic and cell-promoting activities. This chain is Defensin-like peptide 2/4, found in Ornithorhynchus anatinus (Duckbill platypus).